The following is a 112-amino-acid chain: Notch-regulated ankyrin repeat-containing protein A (112 aa).

ANK repeat units lie at residues 48-77 (EGQT…DIRL) and 81-110 (EGWS…YSSG).

The protein belongs to the NRARP family.

Regulates independently canonical Wnt and Notch signaling by modulating LEF1 and Notch protein turnover. Stabilizes LEF1, a pivotal transcription factor in the Wnt signaling cascade, by blocking its ubiquitination. Involved in angiogenesis; involved in intersegmental vessel patterning during development. The protein is Notch-regulated ankyrin repeat-containing protein A (nrarpa) of Danio rerio (Zebrafish).